Reading from the N-terminus, the 338-residue chain is Glyceraldehyde-3-phosphate dehydrogenase (338 aa).

Residues 12-13 (RI), aspartate 34, and arginine 79 each bind NAD(+). Residues 150–152 (SCT), threonine 181, 210–211 (TG), and arginine 233 each bind D-glyceraldehyde 3-phosphate. The active-site Nucleophile is the cysteine 151. Asparagine 315 is a binding site for NAD(+).

The protein belongs to the glyceraldehyde-3-phosphate dehydrogenase family. In terms of assembly, homotetramer.

It is found in the cytoplasm. It carries out the reaction D-glyceraldehyde 3-phosphate + phosphate + NAD(+) = (2R)-3-phospho-glyceroyl phosphate + NADH + H(+). It functions in the pathway carbohydrate degradation; glycolysis; pyruvate from D-glyceraldehyde 3-phosphate: step 1/5. The protein is Glyceraldehyde-3-phosphate dehydrogenase (GPD) of Sordaria macrospora.